Here is an 82-residue protein sequence, read N- to C-terminus: Delta-ctenitoxin-Pn2c (82 aa).

The signal sequence occupies residues 1–17 (MKVAILFLSILVLAVAS). The propeptide occupies 18 to 34 (ESIEESRDDFAVEELGR). Intrachain disulfides connect cysteine 37/cysteine 51, cysteine 44/cysteine 57, cysteine 48/cysteine 80, cysteine 50/cysteine 65, and cysteine 59/cysteine 63.

Expressed by the venom gland.

It is found in the secreted. Functionally, reversible inhibitor of voltage-gated sodium channels (Nav). Delays the fast inactivation kinetics of neuronal-type sodium channels. In vivo, it induces rat penile erection. This effect may be due to the neuronal nitric oxide synthase (NOS1), since one of its selective inhibitor completely abolishes all the toxic effects of the toxin. This toxin also causes scratching, lacrimation, hypersalivation, sweating and agitation followed by spastic paralysis of the anterior and posterior extremities and death at dose levels of 0.24 mg/mouse. It is also insecticidal to the larval and adult forms of the house fly. This is Delta-ctenitoxin-Pn2c from Phoneutria nigriventer (Brazilian armed spider).